The sequence spans 1217 residues: Rho family-interacting cell polarization regulator 1 (1217 aa).

Ser22 bears the Phosphoserine mark. Positions 83 to 112 form a coiled coil; it reads RGLTAYLEVHQQEQEKLQRQIKESKRNSRL. Phosphoserine occurs at positions 345 and 347. Residue Thr351 is modified to Phosphothreonine. The disordered stretch occupies residues 371–413; that stretch reads NGTAWSLSSESSDDSSSPQLSGTARYSSTPKPLVQQPEPLPVQ. 2 stretches are compositionally biased toward low complexity: residues 376–391 and 400–413; these read SLSS…PQLS and PKPL…LPVQ. Phosphoserine occurs at positions 452 and 455. The segment at 565–762 is disordered; sequence TSTTVGSTHK…SPSSIVPEPQ (198 aa). Residues 579–594 show a composition bias toward polar residues; it reads PLTSTGSIPSVTDSIQ. Low complexity predominate over residues 595–649; that stretch reads TTTSPTHTTPSPTHTTVSPTHSTPSPTHTTVSPSNAALSPSNATPSLSHSTTSPT. Residues 650 to 661 are compositionally biased toward polar residues; that stretch reads QKATMSTHTTSA. Residues 664-695 are compositionally biased toward low complexity; sequence PVQTTTSPISTTVSPSPSVDTAIISSSSAVPS. Residues 720–729 are compositionally biased toward polar residues; sequence ACTSSPSLAS. Ser742 carries the phosphoserine modification. Residues 786–828 are a coiled coil; sequence RRLEEALRTLMAALDDYRGQFPELQGLEQEVTRLESLLMQRQG. The disordered stretch occupies residues 850 to 874; the sequence is FLNDDEDEDNDSPGDRPTSSPEVVA. The segment covering 852-861 has biased composition (acidic residues); that stretch reads NDDEDEDNDS. Phosphoserine is present on residues Ser868 and Ser869.

Belongs to the RIPOR family. In terms of assembly, interacts (via N-terminus) with RHOA (GTP-bound form); this interaction links active RHOA to STK24 and STK26 kinases. Interacts with RHOB. Interacts with RHOC. Interacts (via C-terminus) with PDCD10; this interaction occurs in a Rho-independent manner. Interacts (via C-terminus) with STK24; this interaction occurs in a PDCD10-dependent and Rho-independent manner. Interacts (via C-terminus) with STK26; this interaction occurs in a PDCD10-dependent and Rho-independent manner. Interacts (via N-terminus) with 14-3-3 proteins; these interactions occur in a Rho-dependent manner.

The protein localises to the cytoplasm. Its subcellular location is the golgi apparatus. Its function is as follows. Downstream effector protein for Rho-type small GTPases that plays a role in cell polarity and directional migration. Acts as an adapter protein, linking active Rho proteins to STK24 and STK26 kinases, and hence positively regulates Golgi reorientation in polarized cell migration upon Rho activation. Involved in the subcellular relocation of STK26 from the Golgi to cytoplasm punctae in a Rho- and PDCD10-dependent manner upon serum stimulation. This Rattus norvegicus (Rat) protein is Rho family-interacting cell polarization regulator 1.